A 395-amino-acid chain; its full sequence is MNAPVNTPPRPALAIARELAGQFAQTAVERDDRGGTPKAERDALRDSGLLSLVIPQAFGGQGASWHDTFAVVREFARVDSSIAHVFGFHHLMLATVRLFSRPDQWQPWFEQTARKQWFWGNALNPLDTRTVVKHFDGWCEFSGKKSFCSGASDSEMLIASAVDERAGGKLLIAAIPSGRTGISLHNDWNNIGQRQTDSGSATFERVRVEHNELLLDPGPLSTPFAALRPLIAQLHFANLFLGIAEGAFEEARQYTLKESRPWFRSSAASSAEDPYVLRHYGEFWVGLESVRLLIERAARQLDAAWAKEHALTAQERGDLALAIGTAKVAASRHGLDICNRLFEVTGARATHASLRFDRHWRNLRTQTLHDPVDYRIHELGEWALNDKRPAPSFYS.

Its function is as follows. Involved in the dimethyl sulfide degradation pathway. This Pseudomonas putida (Arthrobacter siderocapsulatus) protein is Probable FMNH2-dependent monooxygenase SfnC.